The following is a 602-amino-acid chain: Carbon catabolite repressor protein 4 homolog 1 (602 aa).

The tract at residues 113–136 (ASAATEGNDEEELPRLNSSGSGSG) is disordered. Glu299 lines the Mg(2+) pocket.

Belongs to the CCR4/nocturin family. As to quaternary structure, component of the CCR4-NOT complex, at least composed of CRR4 and CAF1 proteins. The cofactor is Mg(2+).

It is found in the nucleus. The protein resides in the cytoplasm. The enzyme catalyses Exonucleolytic cleavage of poly(A) to 5'-AMP.. Functionally, acts as a catalytic component of the CCR4-NOT core complex, which in the nucleus seems to be a general transcription factor, and in the cytoplasm the major mRNA deadenylase involved in mRNA turnover. The chain is Carbon catabolite repressor protein 4 homolog 1 (CCR4-1) from Arabidopsis thaliana (Mouse-ear cress).